We begin with the raw amino-acid sequence, 545 residues long: Methionine--tRNA ligase (545 aa).

The 'HIGH' region motif lies at 15–25 (PYANGPIHIGH). Residues cysteine 146, cysteine 149, cysteine 159, and cysteine 162 each contribute to the Zn(2+) site. The 'KMSKS' region signature appears at 332 to 336 (KLSKS). Lysine 335 contacts ATP.

Belongs to the class-I aminoacyl-tRNA synthetase family. MetG type 1 subfamily. Monomer. Zn(2+) serves as cofactor.

It localises to the cytoplasm. The enzyme catalyses tRNA(Met) + L-methionine + ATP = L-methionyl-tRNA(Met) + AMP + diphosphate. Its function is as follows. Is required not only for elongation of protein synthesis but also for the initiation of all mRNA translation through initiator tRNA(fMet) aminoacylation. This Buchnera aphidicola subsp. Schizaphis graminum (strain Sg) protein is Methionine--tRNA ligase (metG).